Here is a 115-residue protein sequence, read N- to C-terminus: Con-Ins T2 (115 aa).

The N-terminal stretch at Met-1–Ser-21 is a signal peptide. Positions Ser-22–Arg-29 are excised as a propeptide. 3 disulfide bridges follow: Cys-38/Cys-101, Cys-50/Cys-114, and Cys-100/Cys-105. A 4-carboxyglutamate modification is found at Glu-48. Residues Lys-53 to Arg-94 constitute a propeptide, c peptide. At Glu-98 the chain carries 4-carboxyglutamate. Residue Glu-109 is modified to 4-carboxyglutamate. Cys-114 carries the post-translational modification Cysteine amide.

This sequence belongs to the insulin family. As to quaternary structure, heterodimer of A and B chains; disulfide-linked. As to expression, expressed by the venom gland.

The protein localises to the secreted. In terms of biological role, this venom insulin facilitates prey capture by rapidly inducing hypoglycemic shock. It is one of the smallest known insulin found in nature and lacks the C-terminal segment of the B chain that, in human insulin, mediates engagement of the insulin receptor (INSR) and assembly of the hormone's hexameric storage form. Despite lacking this segment, it both binds and activates human insulin receptor (long isoform (HIR-B)) with a high potency (EC(50)=15.5 nM). In vivo, intraperitoneal injection of this peptide into zebrafish lowers blood glucose with a lower potency than human insulin. In addition, when applied to water, this peptide reduces overall locomotor activity of zebrafish larvae, observed as a significant decrease in the percentage of time spent swimming and movement frequency. When tested on a mouse model of diabetes, this insulin also lowers blood glucose with a 10-fold lower potency than human insulin. The protein is Con-Ins T2 of Conus tulipa (Fish-hunting cone snail).